The following is a 274-amino-acid chain: 2,3,4,5-tetrahydropyridine-2,6-dicarboxylate N-succinyltransferase (274 aa).

It belongs to the transferase hexapeptide repeat family.

It localises to the cytoplasm. The enzyme catalyses (S)-2,3,4,5-tetrahydrodipicolinate + succinyl-CoA + H2O = (S)-2-succinylamino-6-oxoheptanedioate + CoA. It functions in the pathway amino-acid biosynthesis; L-lysine biosynthesis via DAP pathway; LL-2,6-diaminopimelate from (S)-tetrahydrodipicolinate (succinylase route): step 1/3. The protein is 2,3,4,5-tetrahydropyridine-2,6-dicarboxylate N-succinyltransferase of Klebsiella pneumoniae (strain 342).